The primary structure comprises 247 residues: Eukaryotic translation initiation factor 6 (247 aa).

Residues serine 174 and serine 175 each carry the phosphoserine; by CK1 modification.

It belongs to the eIF-6 family. In terms of assembly, monomer. Associates with the 60S ribosomal subunit. In terms of processing, phosphorylation at Ser-174 and Ser-175 promotes nuclear export.

The protein resides in the cytoplasm. The protein localises to the nucleus. It is found in the nucleolus. Its function is as follows. Binds to the 60S ribosomal subunit and prevents its association with the 40S ribosomal subunit to form the 80S initiation complex in the cytoplasm. Is also involved in ribosome biogenesis. Associates with pre-60S subunits in the nucleus and is involved in its nuclear export. The protein is Eukaryotic translation initiation factor 6 (tif6) of Aspergillus oryzae (strain ATCC 42149 / RIB 40) (Yellow koji mold).